Consider the following 428-residue polypeptide: MAITYLKKSPKTSSTDDTKTTGIVQDLLKNIETTKEQGCIDLTKKFDKYDGEIIVSKERIEEIKKTLDQKTKDDVQFSYERVRKFAEAQLKNYGQDFEVELSDGLFAGQKLIPVNTAGCYVPGGRYAHIASAVMSVTTAKVAGVKNVIACSPPKEGVGAHPTIIYTADLCGADVILNLGGVPAIAAMTNGLFNNPPADIIVGPGNQFVAEAKRILFGKVGIDLFAGPTEIGIIADAKADPEIVAVDLVGQAEHGYNSPCWLYTTSKELAEKVMKRVPELIAELPEVPRTNADAAWRDYGEVILCDTDEEMATISDEYAPEHLEVQTENLEWFHKRLTNYGSLFIGEETTVAYGDKCSGTNHILPTKGAGRYTGGLFVGKFVKTLSFQRMTKESTELVGAAAARISRYEGMEAHARTGDVRLKKYGYSS.

Residues Gln-250 and His-253 each contribute to the Zn(2+) site. Active-site proton acceptor residues include Glu-320 and His-321. Zn(2+) is bound by residues Asp-354 and His-413.

This sequence belongs to the histidinol dehydrogenase family. It depends on Zn(2+) as a cofactor.

This chain is Histidinol dehydrogenase homolog, found in Pelagibacter ubique (strain HTCC1062).